The following is a 157-amino-acid chain: MSNSKTVHLYTDGSCLGNPGPGGYGAVLEYGKHHKELSQGYRLTTNNRMEMLATIAGLRELKRSCHVILTTDSQYVKQGVEQWMHRWKQNGWRTSARKAVKNKDLWQQLDEEVNRHKVEWKWIKGHSGHKQNERCDELARDAATREPMLEDEGFGGE.

The region spanning 3-144 (NSKTVHLYTD…CDELARDAAT (142 aa)) is the RNase H type-1 domain. Aspartate 12, glutamate 50, aspartate 72, and aspartate 136 together coordinate Mg(2+).

This sequence belongs to the RNase H family. In terms of assembly, monomer. Requires Mg(2+) as cofactor.

It is found in the cytoplasm. The catalysed reaction is Endonucleolytic cleavage to 5'-phosphomonoester.. Its function is as follows. Endonuclease that specifically degrades the RNA of RNA-DNA hybrids. The chain is Ribonuclease H from Idiomarina loihiensis (strain ATCC BAA-735 / DSM 15497 / L2-TR).